Consider the following 344-residue polypeptide: Arginine N-succinyltransferase (344 aa).

Leucine 125 contributes to the succinyl-CoA binding site. Residue histidine 229 is the Proton donor of the active site.

This sequence belongs to the arginine N-succinyltransferase family.

The enzyme catalyses succinyl-CoA + L-arginine = N(2)-succinyl-L-arginine + CoA + H(+). Its pathway is amino-acid degradation; L-arginine degradation via AST pathway; L-glutamate and succinate from L-arginine: step 1/5. Catalyzes the transfer of succinyl-CoA to arginine to produce N(2)-succinylarginine. This is Arginine N-succinyltransferase from Escherichia coli (strain UTI89 / UPEC).